The following is a 376-amino-acid chain: Palmitoyl-[acyl-carrier-protein] 4-desaturase 2, chloroplastic (376 aa).

The transit peptide at 1–33 directs the protein to the chloroplast; it reads MELHLALRASPLPAADPGRRPPPPRGNFATNCT. Fe cation is bound by residues glutamate 114, glutamate 149, histidine 152, glutamate 202, glutamate 235, and histidine 238.

It belongs to the fatty acid desaturase type 2 family. Homodimer. The cofactor is Fe(2+). As to expression, preferentially expressed in the flower labellum.

It is found in the plastid. It localises to the chloroplast stroma. It carries out the reaction hexadecanoyl-[ACP] + 2 reduced [2Fe-2S]-[ferredoxin] + O2 + 2 H(+) = (4Z)-hexadecenoyl-[ACP] + 2 oxidized [2Fe-2S]-[ferredoxin] + 2 H2O. The enzyme catalyses octadecanoyl-[ACP] + 2 reduced [2Fe-2S]-[ferredoxin] + O2 + 2 H(+) = (9Z)-octadecenoyl-[ACP] + 2 oxidized [2Fe-2S]-[ferredoxin] + 2 H2O. It participates in lipid metabolism; fatty acid metabolism. Converts stearoyl-ACP to oleoyl-ACP by introduction of a cis double bond between carbons 9 and 10 of the acyl chain. Converts palmitoyl-ACP to (4Z)-hexadec-4-enoyl-ACP by introduction of a cis double bond between carbons 4 and 5 of the acyl chain. Catalyzes the desaturation of saturated fatty acid 18:0 and 16:0 to generate 18:1 (delta-9) and 16:1 (delta-4) intermediates, expected to give rise to 9-alkenes and 12-alkenes, respectively. This is Palmitoyl-[acyl-carrier-protein] 4-desaturase 2, chloroplastic (SAD2) from Ophrys sphegodes (Early spider orchid).